The following is a 393-amino-acid chain: Phospho-N-acetylmuramoyl-pentapeptide-transferase (393 aa).

The next 10 membrane-spanning stretches (helical) occupy residues 29-49 (RAVMSAMTALLLGLVFGPWVI), 75-95 (TPTMGGVLILLSIAVSTLLWF), 101-121 (FVWVVMLVTFGFGAIGWVDDW), 138-158 (YLWQSLIGLVAAIYLAFSVSE), 194-214 (VSYPLGVFGFIFLTYFVIVGA), 226-246 (GLAIMPVVLVGSALGLFAYVT), 263-283 (AGELLIFCAAMAGAGLAFLWF), 290-310 (VFMGDVGALALGGALGTIAVI), 315-335 (IVLGIMGGIFVVEALSVMAQV), and 370-390 (QVVVRFWIITMLLCLVGLSTL).

Belongs to the glycosyltransferase 4 family. MraY subfamily. Mg(2+) is required as a cofactor.

The protein resides in the cell inner membrane. It carries out the reaction UDP-N-acetyl-alpha-D-muramoyl-L-alanyl-gamma-D-glutamyl-meso-2,6-diaminopimeloyl-D-alanyl-D-alanine + di-trans,octa-cis-undecaprenyl phosphate = di-trans,octa-cis-undecaprenyl diphospho-N-acetyl-alpha-D-muramoyl-L-alanyl-D-glutamyl-meso-2,6-diaminopimeloyl-D-alanyl-D-alanine + UMP. The protein operates within cell wall biogenesis; peptidoglycan biosynthesis. Catalyzes the initial step of the lipid cycle reactions in the biosynthesis of the cell wall peptidoglycan: transfers peptidoglycan precursor phospho-MurNAc-pentapeptide from UDP-MurNAc-pentapeptide onto the lipid carrier undecaprenyl phosphate, yielding undecaprenyl-pyrophosphoryl-MurNAc-pentapeptide, known as lipid I. This Leptothrix cholodnii (strain ATCC 51168 / LMG 8142 / SP-6) (Leptothrix discophora (strain SP-6)) protein is Phospho-N-acetylmuramoyl-pentapeptide-transferase.